The following is a 324-amino-acid chain: Calpain-2 catalytic subunit (324 aa).

A domain III region spans residues 1 to 138 (YPNTFWMNPQ…KKADYQVVDD (138 aa)). The linker stretch occupies residues 139–153 (EIEADLEENDASEDD). The domain IV stretch occupies residues 158–324 (FRRLFAQLAG…LISWLCFSVL (167 aa)). Residues Ala-166, Asp-169, Glu-171, Glu-176, Asp-209, Asp-211, Ser-213, Lys-215, Glu-220, Asp-239, Asp-241, Ser-243, Thr-245, Glu-250, Asp-282, and Asn-285 each contribute to the Ca(2+) site. EF-hand domains follow at residues 190-224 (DIKSDGFSIETCRIMVDMLDSDGSAKLGLKEFYIL) and 226-261 (TKIQKYQKIYREIDVDRSGTMNSYEMRKALEEAGFK).

It belongs to the peptidase C2 family. Forms a heterodimer with a small (regulatory) subunit (CAPNS1). Interacts with CPEB3; this leads to cleavage of CPEB3. It depends on Ca(2+) as a cofactor. In terms of tissue distribution, ubiquitous.

It localises to the cytoplasm. The protein localises to the cell membrane. It carries out the reaction Broad endopeptidase specificity.. Activated by 200-1000 micromolar concentrations of calcium and inhibited by calpastatin. Its function is as follows. Calcium-regulated non-lysosomal thiol-protease which catalyzes limited proteolysis of substrates involved in cytoskeletal remodeling and signal transduction. Proteolytically cleaves MYOC at 'Arg-226'. Proteolytically cleaves CPEB3 following neuronal stimulation which abolishes CPEB3 translational repressor activity, leading to translation of CPEB3 target mRNAs. This is Calpain-2 catalytic subunit (CAPN2) from Sus scrofa (Pig).